We begin with the raw amino-acid sequence, 204 residues long: Urease accessory protein UreG (204 aa).

GTP is bound at residue 12–19; the sequence is GPVGSGKT.

It belongs to the SIMIBI class G3E GTPase family. UreG subfamily. In terms of assembly, homodimer. UreD, UreF and UreG form a complex that acts as a GTP-hydrolysis-dependent molecular chaperone, activating the urease apoprotein by helping to assemble the nickel containing metallocenter of UreC. The UreE protein probably delivers the nickel.

Its subcellular location is the cytoplasm. In terms of biological role, facilitates the functional incorporation of the urease nickel metallocenter. This process requires GTP hydrolysis, probably effectuated by UreG. This Pseudomonas aeruginosa (strain LESB58) protein is Urease accessory protein UreG.